The primary structure comprises 147 residues: Hemoglobin subunit beta (147 aa).

The Globin domain occupies 2 to 147; that stretch reads ELTEAQRGAI…VVSALGKQYH (146 aa). The heme b site is built by His63 and His92.

It belongs to the globin family. Heterotetramer of two alpha chains and two beta chains. As to expression, red blood cells.

In terms of biological role, involved in oxygen transport from gills to the various peripheral tissues. The chain is Hemoglobin subunit beta (hbb) from Electrophorus electricus (Electric eel).